The chain runs to 246 residues: Acetoacetate decarboxylase (246 aa).

Catalysis depends on lysine 115, which acts as the Schiff-base intermediate with acetoacetate.

Belongs to the ADC family.

It carries out the reaction acetoacetate + H(+) = acetone + CO2. Functionally, catalyzes the conversion of acetoacetate to acetone and carbon dioxide. In Clostridium beijerinckii (Clostridium MP), this protein is Acetoacetate decarboxylase.